We begin with the raw amino-acid sequence, 92 residues long: MTRSLKKGPFVDHHLVAKADKAVTNKDKKPIKTWSRRSMILPEFIGLTIAVHNGKQHVPVYITDQMVGHKLGEFALTRTFKGHPADKKVVRK.

The protein belongs to the universal ribosomal protein uS19 family.

Functionally, protein S19 forms a complex with S13 that binds strongly to the 16S ribosomal RNA. The chain is Small ribosomal subunit protein uS19 from Polaromonas naphthalenivorans (strain CJ2).